The chain runs to 206 residues: Guanylate kinase (206 aa).

Positions 4-182 constitute a Guanylate kinase-like domain; that stretch reads ANLFIISAPS…AVQNLIHIIS (179 aa). An ATP-binding site is contributed by 11–18; sequence APSGAGKT.

Belongs to the guanylate kinase family.

The protein localises to the cytoplasm. The enzyme catalyses GMP + ATP = GDP + ADP. In terms of biological role, essential for recycling GMP and indirectly, cGMP. This Coxiella burnetii (strain RSA 493 / Nine Mile phase I) protein is Guanylate kinase.